Here is a 490-residue protein sequence, read N- to C-terminus: Aspartyl/glutamyl-tRNA(Asn/Gln) amidotransferase subunit B (490 aa).

This sequence belongs to the GatB/GatE family. GatB subfamily. Heterotrimer of A, B and C subunits.

The enzyme catalyses L-glutamyl-tRNA(Gln) + L-glutamine + ATP + H2O = L-glutaminyl-tRNA(Gln) + L-glutamate + ADP + phosphate + H(+). It catalyses the reaction L-aspartyl-tRNA(Asn) + L-glutamine + ATP + H2O = L-asparaginyl-tRNA(Asn) + L-glutamate + ADP + phosphate + 2 H(+). Functionally, allows the formation of correctly charged Asn-tRNA(Asn) or Gln-tRNA(Gln) through the transamidation of misacylated Asp-tRNA(Asn) or Glu-tRNA(Gln) in organisms which lack either or both of asparaginyl-tRNA or glutaminyl-tRNA synthetases. The reaction takes place in the presence of glutamine and ATP through an activated phospho-Asp-tRNA(Asn) or phospho-Glu-tRNA(Gln). This chain is Aspartyl/glutamyl-tRNA(Asn/Gln) amidotransferase subunit B, found in Burkholderia vietnamiensis (strain G4 / LMG 22486) (Burkholderia cepacia (strain R1808)).